The following is a 66-amino-acid chain: Large ribosomal subunit protein bL35 (66 aa).

Belongs to the bacterial ribosomal protein bL35 family.

The polypeptide is Large ribosomal subunit protein bL35 (Wigglesworthia glossinidia brevipalpis).